A 354-amino-acid polypeptide reads, in one-letter code: Uroporphyrinogen decarboxylase (354 aa).

Substrate-binding positions include Arg-27–Arg-31, Asp-77, Tyr-154, Ser-209, and His-327.

It belongs to the uroporphyrinogen decarboxylase family. As to quaternary structure, homodimer.

The protein localises to the cytoplasm. It catalyses the reaction uroporphyrinogen III + 4 H(+) = coproporphyrinogen III + 4 CO2. Its pathway is porphyrin-containing compound metabolism; protoporphyrin-IX biosynthesis; coproporphyrinogen-III from 5-aminolevulinate: step 4/4. Catalyzes the decarboxylation of four acetate groups of uroporphyrinogen-III to yield coproporphyrinogen-III. The protein is Uroporphyrinogen decarboxylase of Pseudomonas syringae pv. syringae (strain B728a).